A 63-amino-acid chain; its full sequence is Beta-defensin 4 (63 aa).

The N-terminal stretch at 1–22 is a signal peptide; it reads MRIHYLLFSFLLVLLSPLSAFT. At Q23 the chain carries Pyrrolidone carboxylic acid. Intrachain disulfides connect C31–C59, C38–C52, and C42–C60.

It belongs to the beta-defensin family. As to expression, highly expressed in lung.

Its subcellular location is the secreted. In terms of biological role, exhibits antimicrobial activity against Gram-negative bacteria and Gram-positive bacteria. May act as a ligand for C-C chemokine receptor CCR6. Binds to CCR6 and induces chemotactic activity of CCR6-expressing cells. The sequence is that of Beta-defensin 4 (Defb4) from Rattus norvegicus (Rat).